Here is a 225-residue protein sequence, read N- to C-terminus: Ribonuclease 3 (225 aa).

Positions 5 to 127 constitute an RNase III domain; it reads LDRLQRSLGH…VFAATFLDQG (123 aa). E40 is a binding site for Mg(2+). D44 is a catalytic residue. Positions 113 and 116 each coordinate Mg(2+). E116 is a catalytic residue. Residues 154 to 224 form the DRBM domain; the sequence is DPKTALQELL…AELALAQLRK (71 aa).

This sequence belongs to the ribonuclease III family. In terms of assembly, homodimer. The cofactor is Mg(2+).

Its subcellular location is the cytoplasm. The catalysed reaction is Endonucleolytic cleavage to 5'-phosphomonoester.. Its function is as follows. Digests double-stranded RNA. Involved in the processing of primary rRNA transcript to yield the immediate precursors to the large and small rRNAs (23S and 16S). Processes some mRNAs, and tRNAs when they are encoded in the rRNA operon. Processes pre-crRNA and tracrRNA of type II CRISPR loci if present in the organism. The protein is Ribonuclease 3 of Aromatoleum aromaticum (strain DSM 19018 / LMG 30748 / EbN1) (Azoarcus sp. (strain EbN1)).